The primary structure comprises 106 residues: Large ribosomal subunit protein bL21 (106 aa).

This sequence belongs to the bacterial ribosomal protein bL21 family. As to quaternary structure, part of the 50S ribosomal subunit. Contacts protein L20.

This protein binds to 23S rRNA in the presence of protein L20. In Xanthomonas campestris pv. campestris (strain ATCC 33913 / DSM 3586 / NCPPB 528 / LMG 568 / P 25), this protein is Large ribosomal subunit protein bL21.